We begin with the raw amino-acid sequence, 649 residues long: uncharacterized protein (649 aa).

It is found in the nucleus. The protein localises to the cytoplasm. This is an uncharacterized protein from Schizosaccharomyces pombe (strain 972 / ATCC 24843) (Fission yeast).